The primary structure comprises 285 residues: 4-diphosphocytidyl-2-C-methyl-D-erythritol kinase (285 aa).

Lys-12 is a catalytic residue. 95–105 serves as a coordination point for ATP; that stretch reads PVGAGLAGGST. The active site involves Asp-137.

It belongs to the GHMP kinase family. IspE subfamily.

It carries out the reaction 4-CDP-2-C-methyl-D-erythritol + ATP = 4-CDP-2-C-methyl-D-erythritol 2-phosphate + ADP + H(+). It participates in isoprenoid biosynthesis; isopentenyl diphosphate biosynthesis via DXP pathway; isopentenyl diphosphate from 1-deoxy-D-xylulose 5-phosphate: step 3/6. Its function is as follows. Catalyzes the phosphorylation of the position 2 hydroxy group of 4-diphosphocytidyl-2C-methyl-D-erythritol. The protein is 4-diphosphocytidyl-2-C-methyl-D-erythritol kinase of Syntrophomonas wolfei subsp. wolfei (strain DSM 2245B / Goettingen).